We begin with the raw amino-acid sequence, 427 residues long: 3-phosphoshikimate 1-carboxyvinyltransferase (427 aa).

Residues Lys22, Ser23, and Arg27 each contribute to the 3-phosphoshikimate site. Lys22 contacts phosphoenolpyruvate. Phosphoenolpyruvate contacts are provided by Gly96 and Arg124. 3-phosphoshikimate contacts are provided by Ser169, Ser170, Gln171, Ser197, Asp313, Asn336, and Lys340. Position 171 (Gln171) interacts with phosphoenolpyruvate. The Proton acceptor role is filled by Asp313. Residues Arg344, Arg386, and Lys411 each contribute to the phosphoenolpyruvate site.

The protein belongs to the EPSP synthase family. Monomer.

It is found in the cytoplasm. It catalyses the reaction 3-phosphoshikimate + phosphoenolpyruvate = 5-O-(1-carboxyvinyl)-3-phosphoshikimate + phosphate. It functions in the pathway metabolic intermediate biosynthesis; chorismate biosynthesis; chorismate from D-erythrose 4-phosphate and phosphoenolpyruvate: step 6/7. Catalyzes the transfer of the enolpyruvyl moiety of phosphoenolpyruvate (PEP) to the 5-hydroxyl of shikimate-3-phosphate (S3P) to produce enolpyruvyl shikimate-3-phosphate and inorganic phosphate. The protein is 3-phosphoshikimate 1-carboxyvinyltransferase of Salmonella typhimurium (strain LT2 / SGSC1412 / ATCC 700720).